Consider the following 433-residue polypeptide: uncharacterized protein (433 aa).

A helical transmembrane segment spans residues 36–58; the sequence is YYYYVQLAFKMLVGVLKNLPVVY. The tract at residues 169 to 433 is disordered; the sequence is VRVPSRDLQP…GEGRDLPEDN (265 aa). 2 stretches are compositionally biased toward acidic residues: residues 216–227 and 234–254; these read GEPGENGDESDE and GDED…YESD. Composition is skewed to basic and acidic residues over residues 265–280, 354–364, and 422–433; these read EPDR…RGSE, GGRRPARRDSP, and RRGEGRDLPEDN.

It is found in the host membrane. This is an uncharacterized protein from Psittacid herpesvirus 1 (isolate Amazon parrot/-/97-0001/1997) (PsHV-1).